The primary structure comprises 129 residues: Small ribosomal subunit protein uS11 (129 aa).

This sequence belongs to the universal ribosomal protein uS11 family. As to quaternary structure, part of the 30S ribosomal subunit. Interacts with proteins S7 and S18. Binds to IF-3.

Its function is as follows. Located on the platform of the 30S subunit, it bridges several disparate RNA helices of the 16S rRNA. Forms part of the Shine-Dalgarno cleft in the 70S ribosome. This Symbiobacterium thermophilum (strain DSM 24528 / JCM 14929 / IAM 14863 / T) protein is Small ribosomal subunit protein uS11.